A 564-amino-acid chain; its full sequence is ATP-dependent RNA helicase ROK1 (564 aa).

2 disordered regions span residues methionine 1–isoleucine 45 and glutamate 62–isoleucine 87. Basic and acidic residues-rich tracts occupy residues valine 13–alanine 23, aspartate 33–isoleucine 45, and glutamate 62–leucine 86. Residues aspartate 122–cysteine 150 carry the Q motif motif. One can recognise a Helicase ATP-binding domain in the interval isoleucine 153–valine 333. Residue glycine 166 to threonine 173 participates in ATP binding. A DEAD box motif is present at residues aspartate 280–aspartate 283. In terms of domain architecture, Helicase C-terminal spans asparagine 344 to alanine 506. The interval glutamate 512–lysine 564 is disordered. Basic and acidic residues predominate over residues lysine 553–lysine 564.

Belongs to the DEAD box helicase family. DDX52/ROK1 subfamily. As to quaternary structure, interacts with the U3 snoRNA and is associated with the 90S and 40S pre-ribosomes. This association requires the presence of RRP5. Also interacts with OSH3.

It is found in the nucleus. The protein resides in the nucleolus. The enzyme catalyses ATP + H2O = ADP + phosphate + H(+). Functionally, ATP-dependent RNA helicase involved in 40S ribosomal subunit biogenesis. Required for the processing and cleavage of 35S pre-rRNA at sites A0, A1, and A2, leading to mature 18S rRNA. May also have a gene-specific regulatory function since it affects nuclear fusion by regulating KAR4 expression and contributes with KEM1 to ISP-1 sensitivity. The protein is ATP-dependent RNA helicase ROK1 (ROK1) of Saccharomyces cerevisiae (strain ATCC 204508 / S288c) (Baker's yeast).